The chain runs to 967 residues: Phosphoenolpyruvate carboxylase 2 (967 aa).

Position 13 is a phosphoserine (S13). Active-site residues include H174 and K602.

It belongs to the PEPCase type 1 family. As to quaternary structure, homotetramer. Mg(2+) serves as cofactor.

It localises to the cytoplasm. The enzyme catalyses oxaloacetate + phosphate = phosphoenolpyruvate + hydrogencarbonate. It participates in photosynthesis; C3 acid pathway. With respect to regulation, by light-reversible phosphorylation. Its function is as follows. Through the carboxylation of phosphoenolpyruvate (PEP) it forms oxaloacetate, a four-carbon dicarboxylic acid source for the tricarboxylic acid cycle. This Zea mays (Maize) protein is Phosphoenolpyruvate carboxylase 2 (PEP4).